Consider the following 444-residue polypeptide: Tubulin beta-8 chain (444 aa).

An MREI motif motif is present at residues 1–4; that stretch reads MREI. Residues Gln11, Glu69, Ser138, Gly142, Thr143, and Gly144 each contribute to the GTP site. Glu69 contacts Mg(2+). Ser172 is modified (phosphoserine; by CDK1). 2 residues coordinate GTP: Asn204 and Asn226. The disordered stretch occupies residues 423–444; it reads QQYQDATAEEEEDEEYAEEEVA. Acidic residues predominate over residues 429 to 444; the sequence is TAEEEEDEEYAEEEVA. Residue Glu436 is modified to 5-glutamyl polyglutamate.

This sequence belongs to the tubulin family. As to quaternary structure, dimer of alpha and beta chains. A typical microtubule is a hollow water-filled tube with an outer diameter of 25 nm and an inner diameter of 15 nM. Alpha-beta heterodimers associate head-to-tail to form protofilaments running lengthwise along the microtubule wall with the beta-tubulin subunit facing the microtubule plus end conferring a structural polarity. Microtubules usually have 13 protofilaments but different protofilament numbers can be found in some organisms and specialized cells. It depends on Mg(2+) as a cofactor. Some glutamate residues at the C-terminus are polyglycylated, resulting in polyglycine chains on the gamma-carboxyl group. Glycylation is mainly limited to tubulin incorporated into axonemes (cilia and flagella) whereas glutamylation is prevalent in neuronal cells, centrioles, axonemes, and the mitotic spindle. Both modifications can coexist on the same protein on adjacent residues, and lowering polyglycylation levels increases polyglutamylation, and reciprocally. Cilia and flagella glycylation is required for their stability and maintenance. Flagella glycylation controls sperm motility. Post-translationally, some glutamate residues at the C-terminus are polyglutamylated, resulting in polyglutamate chains on the gamma-carboxyl group. Polyglutamylation plays a key role in microtubule severing by spastin (SPAST). SPAST preferentially recognizes and acts on microtubules decorated with short polyglutamate tails: severing activity by SPAST increases as the number of glutamates per tubulin rises from one to eight, but decreases beyond this glutamylation threshold. Glutamylation is also involved in cilia motility. In terms of processing, phosphorylated on Ser-172 by CDK1 during the cell cycle, from metaphase to telophase, but not in interphase. This phosphorylation inhibits tubulin incorporation into microtubules.

It localises to the cytoplasm. The protein localises to the cytoskeleton. Its subcellular location is the spindle. Tubulin is the major constituent of microtubules, a cylinder consisting of laterally associated linear protofilaments composed of alpha- and beta-tubulin heterodimers. Microtubules grow by the addition of GTP-tubulin dimers to the microtubule end, where a stabilizing cap forms. Below the cap, tubulin dimers are in GDP-bound state, owing to GTPase activity of alpha-tubulin. Has a key role in meiotic spindle assembly and oocyte maturation. The sequence is that of Tubulin beta-8 chain (TUBB8) from Pan troglodytes (Chimpanzee).